Reading from the N-terminus, the 129-residue chain is NADPH-dependent 7-cyano-7-deazaguanine reductase (129 aa).

The active-site Thioimide intermediate is the Cys34. The active-site Proton donor is the Asp41. Substrate is bound by residues 56-58 and 75-76; these read VEL and HE.

This sequence belongs to the GTP cyclohydrolase I family. QueF type 1 subfamily.

Its subcellular location is the cytoplasm. The enzyme catalyses 7-aminomethyl-7-carbaguanine + 2 NADP(+) = 7-cyano-7-deazaguanine + 2 NADPH + 3 H(+). The protein operates within tRNA modification; tRNA-queuosine biosynthesis. Functionally, catalyzes the NADPH-dependent reduction of 7-cyano-7-deazaguanine (preQ0) to 7-aminomethyl-7-deazaguanine (preQ1). This chain is NADPH-dependent 7-cyano-7-deazaguanine reductase, found in Nitrosococcus oceani (strain ATCC 19707 / BCRC 17464 / JCM 30415 / NCIMB 11848 / C-107).